The following is a 546-amino-acid chain: Zinc metalloproteinase nas-9 (546 aa).

A signal peptide spans 1 to 14 (MIFLLFVVFPFVYA). A propeptide spanning residues 15 to 300 (QLLPELLAGF…GGGGGGRVPR (286 aa)) is cleaved from the precursor. Asparagine 248 carries an N-linked (GlcNAc...) asparagine glycan. Residues 308-507 (SAVQKWDIWK…IRLLKKMYCR (200 aa)) enclose the Peptidase M12A domain. Disulfide bonds link cysteine 347–cysteine 506, cysteine 372–cysteine 392, cysteine 510–cysteine 546, cysteine 517–cysteine 539, and cysteine 526–cysteine 543. Histidine 401 contacts Zn(2+). Residue glutamate 402 is part of the active site. Zn(2+) is bound by residues histidine 405 and histidine 411. The 37-residue stretch at 510 to 546 (CDDQNVHCGTWALHGYCKMKEQMKWMNENCKASCDKC) folds into the ShKT domain.

The cofactor is Zn(2+). In terms of tissue distribution, expressed in hypodermis, uterus and spermatheca.

It is found in the secreted. In terms of biological role, metalloprotease. In Caenorhabditis elegans, this protein is Zinc metalloproteinase nas-9 (nas-9).